Consider the following 194-residue polypeptide: Small ribosomal subunit protein uS4c (194 aa).

An S4 RNA-binding domain is found at 84–144; that stretch reads MRLDTLLYRT…KEILKSLNDK (61 aa).

It belongs to the universal ribosomal protein uS4 family. Part of the 30S ribosomal subunit. Contacts protein S5. The interaction surface between S4 and S5 is involved in control of translational fidelity.

The protein localises to the plastid. It localises to the chloroplast. In terms of biological role, one of the primary rRNA binding proteins, it binds directly to 16S rRNA where it nucleates assembly of the body of the 30S subunit. Its function is as follows. With S5 and S12 plays an important role in translational accuracy. The sequence is that of Small ribosomal subunit protein uS4c (rps4) from Bigelowiella natans (Pedinomonas minutissima).